Consider the following 396-residue polypeptide: Probable sugar efflux transporter (396 aa).

The next 12 helical transmembrane spans lie at 15–35 (VVTL…PVGL), 50–70 (VGIM…PFML), 81–101 (LICL…AWNF), 103–123 (VLVI…SITA), 136–156 (AQAL…GLPI), 169–189 (TFFA…KLLP), 209–229 (PALM…YTAY), 246–266 (FATV…LVFG), 275–295 (LLVS…LPAA), 301–321 (LALL…GMQV), 333–353 (VAMA…ALAG), and 364–384 (TIGY…VLIF).

The protein belongs to the major facilitator superfamily. SotB (TC 2.A.1.2) family.

Its subcellular location is the cell inner membrane. In terms of biological role, involved in the efflux of sugars. The physiological role may be the reduction of the intracellular concentration of toxic sugars or sugar metabolites. The sequence is that of Probable sugar efflux transporter from Salmonella arizonae (strain ATCC BAA-731 / CDC346-86 / RSK2980).